We begin with the raw amino-acid sequence, 59 residues long: Large ribosomal subunit protein bL32 (59 aa).

Basic residues predominate over residues 1–15 (MANPKRKQSKRRSAN). The tract at residues 1-48 (MANPKRKQSKRRSANRRAANAFIAPEFAKDPTDGSAFRPHRVNPKNGM) is disordered.

The protein belongs to the bacterial ribosomal protein bL32 family.

This is Large ribosomal subunit protein bL32 from Opitutus terrae (strain DSM 11246 / JCM 15787 / PB90-1).